The following is a 759-amino-acid chain: Phosphoribosylformylglycinamidine synthase subunit PurL (759 aa).

Histidine 46 is an active-site residue. Residues tyrosine 49 and lysine 88 each coordinate ATP. A Mg(2+)-binding site is contributed by glutamate 90. Substrate-binding positions include 91 to 94 (SHNH) and arginine 113. Histidine 92 functions as the Proton acceptor in the catalytic mechanism. Aspartate 114 lines the Mg(2+) pocket. Glutamine 237 serves as a coordination point for substrate. Aspartate 265 provides a ligand contact to Mg(2+). 309–311 (ESQ) contacts substrate. 2 residues coordinate ATP: aspartate 498 and glycine 535. Asparagine 536 is a binding site for Mg(2+). Serine 538 lines the substrate pocket.

Belongs to the FGAMS family. In terms of assembly, monomer. Part of the FGAM synthase complex composed of 1 PurL, 1 PurQ and 2 PurS subunits.

Its subcellular location is the cytoplasm. It carries out the reaction N(2)-formyl-N(1)-(5-phospho-beta-D-ribosyl)glycinamide + L-glutamine + ATP + H2O = 2-formamido-N(1)-(5-O-phospho-beta-D-ribosyl)acetamidine + L-glutamate + ADP + phosphate + H(+). It functions in the pathway purine metabolism; IMP biosynthesis via de novo pathway; 5-amino-1-(5-phospho-D-ribosyl)imidazole from N(2)-formyl-N(1)-(5-phospho-D-ribosyl)glycinamide: step 1/2. Part of the phosphoribosylformylglycinamidine synthase complex involved in the purines biosynthetic pathway. Catalyzes the ATP-dependent conversion of formylglycinamide ribonucleotide (FGAR) and glutamine to yield formylglycinamidine ribonucleotide (FGAM) and glutamate. The FGAM synthase complex is composed of three subunits. PurQ produces an ammonia molecule by converting glutamine to glutamate. PurL transfers the ammonia molecule to FGAR to form FGAM in an ATP-dependent manner. PurS interacts with PurQ and PurL and is thought to assist in the transfer of the ammonia molecule from PurQ to PurL. The chain is Phosphoribosylformylglycinamidine synthase subunit PurL from Anaeromyxobacter dehalogenans (strain 2CP-1 / ATCC BAA-258).